Reading from the N-terminus, the 275-residue chain is Melanoma-associated antigen B5 (275 aa).

A disordered region spans residues 1–33 (MTSAGVFNAGSDERANSRDEEYPCSSEVSPSTE). Positions 11 to 21 (SDERANSRDEE) are enriched in basic and acidic residues. Over residues 23 to 33 (PCSSEVSPSTE) the composition is skewed to low complexity. One can recognise an MAGE domain in the interval 40 to 239 (INIKVGLLEQ…GAFSSQYEEA (200 aa)).

In terms of tissue distribution, expressed in testis. Not expressed in other normal tissues, but is expressed in tumors of different histological origins.

The polypeptide is Melanoma-associated antigen B5 (MAGEB5) (Homo sapiens (Human)).